The primary structure comprises 180 residues: MSRIGRLPIAIPNGVTVTVSPENVVTVKGPKGELTKTMHPNIDIAIEENSVIVTRKNDEKQNRSLHGLTRSLVNNMVVGVTEGYEKKLELVGVGYRAQLQGKKLVLNLGFSHPVEIEAKEGVEFQLDGTNKITVKGIDKELVGAVASDIRSWRKPEPYKGKGIKYENEAIRRKEGKTGKK.

It belongs to the universal ribosomal protein uL6 family. As to quaternary structure, part of the 50S ribosomal subunit.

This protein binds to the 23S rRNA, and is important in its secondary structure. It is located near the subunit interface in the base of the L7/L12 stalk, and near the tRNA binding site of the peptidyltransferase center. The chain is Large ribosomal subunit protein uL6 from Clostridium tetani (strain Massachusetts / E88).